A 667-amino-acid polypeptide reads, in one-letter code: Bicarbonate transport ATP-binding protein CmpC (667 aa).

The ABC transporter domain occupies 5–239; that stretch reads VAVDNIDKVF…RPRKRMEVVE (235 aa). 42 to 49 serves as a coordination point for ATP; that stretch reads GHSGCGKS. The tract at residues 281 to 667 is cmpA-like; sequence LELGYVPLVA…DNPTPAPVFA (387 aa).

The protein belongs to the ABC transporter superfamily. Nitrate/nitrite/cyanate uptake transporter (NitT) (TC 3.A.1.16) family. In terms of assembly, the complex is composed of two ATP-binding proteins (CmpC and CmpD), a transmembrane protein (CmpB) and a solute-binding protein (CmpA).

The protein localises to the cell inner membrane. Functionally, part of the ABC transporter complex CmpABCD involved in bicarbonate transport. Responsible for energy coupling to the transport system. This is Bicarbonate transport ATP-binding protein CmpC (cmpC) from Synechocystis sp. (strain ATCC 27184 / PCC 6803 / Kazusa).